We begin with the raw amino-acid sequence, 217 residues long: Translation initiation factor 6 (217 aa).

It belongs to the eIF-6 family.

Its function is as follows. Binds to the 50S ribosomal subunit and prevents its association with the 30S ribosomal subunit to form the 70S initiation complex. This chain is Translation initiation factor 6, found in Methanococcoides burtonii (strain DSM 6242 / NBRC 107633 / OCM 468 / ACE-M).